The primary structure comprises 126 residues: Adenosine 5'-monophosphoramidase HINT1 (126 aa).

Residue alanine 2 is modified to N-acetylalanine. The 109-residue stretch at 18-126 folds into the HIT domain; sequence IFGKIIRKEI…GGRQMNWPPG (109 aa). N6-acetyllysine is present on residues lysine 21 and lysine 30. Position 43-44 (43-44) interacts with AMP; the sequence is DI. 2 positions are modified to phosphoserine: serine 45 and serine 72. AMP contacts are provided by residues asparagine 99, 105–107, and 112–114; these read GQS and HLH. The Histidine triad motif signature appears at 110–114; it reads HVHLH. Histidine 112 functions as the Tele-AMP-histidine intermediate in the catalytic mechanism.

This sequence belongs to the HINT family. In terms of assembly, homodimer. Interacts with CDK7. Interacts with RUVBL1 and RUVBL2 and is associated with the LEF1/TCF1-CTNNB1 complex and with a KAT5 histone acetyltransferase complex. Identified in a complex with MITF and CTNNB1. Interacts with CDC34 and RBX1, and is part of a SCF (SKP2-CUL1-F-box protein) E3 ubiquitin-protein ligase complex. Interacts with SUMO1, SUMO2 and RGS17. Interacts with the Ten-1 ICD form of TENM1. Interacts with CALM1; interaction increases in the presence of calcium ions. As to expression, widely expressed.

It localises to the cytoplasm. The protein localises to the nucleus. The catalysed reaction is adenosine 5'-phosphoramidate + H2O = AMP + NH4(+). In terms of biological role, exhibits adenosine 5'-monophosphoramidase activity, hydrolyzing purine nucleotide phosphoramidates with a single phosphate group such as adenosine 5'monophosphoramidate (AMP-NH2) to yield AMP and NH2. Hydrolyzes adenosine 5'monophosphomorpholidate (AMP-morpholidate) and guanosine 5'monophosphomorpholidate (GMP-morpholidate). Hydrolyzes lysyl-AMP (AMP-N-epsilon-(N-alpha-acetyl lysine methyl ester)) generated by lysine tRNA ligase, as well as Met-AMP, His-AMP and Asp-AMP, lysyl-GMP (GMP-N-epsilon-(N-alpha-acetyl lysine methyl ester)) and AMP-N-alanine methyl ester. Can also convert adenosine 5'-O-phosphorothioate and guanosine 5'-O-phosphorothioate to the corresponding nucleoside 5'-O-phosphates with concomitant release of hydrogen sulfide. In addition, functions as a scaffolding protein that modulates transcriptional activation by the LEF1/TCF1-CTNNB1 complex and by the complex formed with MITF and CTNNB1. Modulates p53/TP53 levels and p53/TP53-mediated apoptosis. Modulates proteasomal degradation of target proteins by the SCF (SKP2-CUL1-F-box protein) E3 ubiquitin-protein ligase complex. Also exhibits SUMO-specific isopeptidase activity, deconjugating SUMO1 from RANGAP1 and RGS17. This is Adenosine 5'-monophosphoramidase HINT1 (HINT1) from Bos taurus (Bovine).